The chain runs to 342 residues: MATAKKITIHDVALAAGVSVSTVSLVLSGKGRISTATGERVNAAIEELGFVRNRQASALRGGQSGVIGLIVRDLSAPFYAELTAGLTEALEAQGRMVFLLHGGKDGEQLAQRFSLLLNQGVDGVVIAGAAGSSDDLRRMAEEKAIPVIFASRASYLDDVDTVRPDNMQAAQLLTEHLIRNGHQRIAWLGGQSSSLTRAERVGGYCATLLKFGLPFHSDWVLECTSSQKQAAEAITALLRHNPTISAVVCYNETIAMGAWFGLLKAGRQSGESGVDRYFEQQVSLAAFTDATPTTLDDIPVTWASTPARELGITLADRMMQKITHEETHSRNLIIPARLIAAK.

One can recognise an HTH lacI-type domain in the interval 7 to 61 (ITIHDVALAAGVSVSTVSLVLSGKGRISTATGERVNAAIEELGFVRNRQASALRG). The H-T-H motif DNA-binding region spans 9-28 (IHDVALAAGVSVSTVSLVLS).

In terms of biological role, repressor for the malX and malY genes. Also regulates its own expression. Binds maltose as an inducer. The polypeptide is Maltose regulon regulatory protein MalI (malI) (Escherichia coli (strain K12)).